We begin with the raw amino-acid sequence, 107 residues long: Stellacyanin (107 aa).

The Phytocyanin domain maps to 1–105 (TVYTVGDSAG…GQKVHINVTV (105 aa)). A glycan (N-linked (GlcNAc...) asparagine) is linked at asparagine 28. Histidine 46 provides a ligand contact to Cu cation. Cysteines 59 and 93 form a disulfide. The N-linked (GlcNAc...) asparagine glycan is linked to asparagine 60. Residues cysteine 87, histidine 92, and glutamine 97 each contribute to the Cu cation site. N-linked (GlcNAc...) asparagine glycosylation occurs at asparagine 102.

The protein is Stellacyanin of Toxicodendron vernicifluum (Japanese lacquer tree).